A 92-amino-acid chain; its full sequence is Protein AC152 (92 aa).

Acts as a transactivator of AC102 and HE65 genes. Therefore, participates in the global recruitment of G-actin to the host nucleus. This Autographa californica nuclear polyhedrosis virus (AcMNPV) protein is Protein AC152 (AC152).